The primary structure comprises 418 residues: Serine/threonine transporter SstT (418 aa).

9 helical membrane passes run 16-36, 45-65, 83-103, 142-162, 192-212, 218-238, 289-309, 317-337, and 364-384; these read SLVS…TLIP, LGTL…LLLV, LLIL…VASF, ALLE…GLSL, PLGI…SALL, LIVL…LIVF, VSIP…ITVL, LGIS…TISA, and VAMQ…SAET.

Belongs to the dicarboxylate/amino acid:cation symporter (DAACS) (TC 2.A.23) family.

It localises to the cell inner membrane. The enzyme catalyses L-serine(in) + Na(+)(in) = L-serine(out) + Na(+)(out). It catalyses the reaction L-threonine(in) + Na(+)(in) = L-threonine(out) + Na(+)(out). Involved in the import of serine and threonine into the cell, with the concomitant import of sodium (symport system). This Tolumonas auensis (strain DSM 9187 / NBRC 110442 / TA 4) protein is Serine/threonine transporter SstT.